We begin with the raw amino-acid sequence, 187 residues long: ATP synthase subunit b 2 (187 aa).

Residues 1–13 (MAESHATGTTTHT) show a composition bias toward polar residues. The segment at 1 to 21 (MAESHATGTTTHTEVPHGKPE) is disordered. Residues 31-53 (ASQLVSFAIAFALLYVIVSRFAL) traverse the membrane as a helical segment.

This sequence belongs to the ATPase B chain family. In terms of assembly, F-type ATPases have 2 components, F(1) - the catalytic core - and F(0) - the membrane proton channel. F(1) has five subunits: alpha(3), beta(3), gamma(1), delta(1), epsilon(1). F(0) has three main subunits: a(1), b(2) and c(10-14). The alpha and beta chains form an alternating ring which encloses part of the gamma chain. F(1) is attached to F(0) by a central stalk formed by the gamma and epsilon chains, while a peripheral stalk is formed by the delta and b chains.

It localises to the cell inner membrane. Functionally, f(1)F(0) ATP synthase produces ATP from ADP in the presence of a proton or sodium gradient. F-type ATPases consist of two structural domains, F(1) containing the extramembraneous catalytic core and F(0) containing the membrane proton channel, linked together by a central stalk and a peripheral stalk. During catalysis, ATP synthesis in the catalytic domain of F(1) is coupled via a rotary mechanism of the central stalk subunits to proton translocation. In terms of biological role, component of the F(0) channel, it forms part of the peripheral stalk, linking F(1) to F(0). The b'-subunit is a diverged and duplicated form of b found in plants and photosynthetic bacteria. The protein is ATP synthase subunit b 2 (atpF2) of Afipia carboxidovorans (strain ATCC 49405 / DSM 1227 / KCTC 32145 / OM5) (Oligotropha carboxidovorans).